The primary structure comprises 472 residues: Hepatocyte nuclear factor 3-alpha (472 aa).

A DNA-binding region (fork-head) is located at residues 169-260; that stretch reads AKPPYSYISL…GNMFENGCYL (92 aa). Residues 269–392 form a disordered region; it reads EKQPGAGGGG…ESQLHLKGDP (124 aa). The span at 273–289 shows a compositional bias: gly residues; sequence GAGGGGGSGSGGSGAKG. Phosphoserine occurs at positions 307 and 331. Composition is skewed to low complexity over residues 322–332 and 351–366; these read GAPAPGPAASP and TPAS…GPGA.

In terms of assembly, binds DNA as a monomer. Interacts with FOXA2. Interacts with NKX2-1. Interacts with HDAC7. Interacts with the histone H3-H4 heterodimer. Associates with nucleosomes containing histone H2A. Interacts with AR. Interacts with NR0B2. Highly expressed in prostate and ESR1-positive breast tumors. Overexpressed in esophageal and lung adenocarcinomas.

The protein localises to the nucleus. Transcription factor that is involved in embryonic development, establishment of tissue-specific gene expression and regulation of gene expression in differentiated tissues. Is thought to act as a 'pioneer' factor opening the compacted chromatin for other proteins through interactions with nucleosomal core histones and thereby replacing linker histones at target enhancer and/or promoter sites. Binds DNA with the consensus sequence 5'-[AC]A[AT]T[AG]TT[GT][AG][CT]T[CT]-3'. Proposed to play a role in translating the epigenetic signatures into cell type-specific enhancer-driven transcriptional programs. Its differential recruitment to chromatin is dependent on distribution of histone H3 methylated at 'Lys-5' (H3K4me2) in estrogen-regulated genes. Involved in the development of multiple endoderm-derived organ systems such as liver, pancreas, lung and prostate; FOXA1 and FOXA2 seem to have at least in part redundant roles. Modulates the transcriptional activity of nuclear hormone receptors. Is involved in ESR1-mediated transcription; required for ESR1 binding to the NKX2-1 promoter in breast cancer cells; binds to the RPRM promoter and is required for the estrogen-induced repression of RPRM. Involved in regulation of apoptosis by inhibiting the expression of BCL2. Involved in cell cycle regulation by activating expression of CDKN1B, alone or in conjunction with BRCA1. Originally described as a transcription activator for a number of liver genes such as AFP, albumin, tyrosine aminotransferase, PEPCK, etc. Interacts with the cis-acting regulatory regions of these genes. Involved in glucose homeostasis. The protein is Hepatocyte nuclear factor 3-alpha (FOXA1) of Homo sapiens (Human).